The chain runs to 226 residues: V-type proton ATPase subunit E 2 (226 aa).

It belongs to the V-ATPase E subunit family. V-ATPase is a heteromultimeric enzyme made up of two complexes: the ATP-hydrolytic V1 complex and the proton translocation V0 complex. The V1 complex consists of three catalytic AB heterodimers that form a heterohexamer, three peripheral stalks each consisting of EG heterodimers, one central rotor including subunits D and F, and the regulatory subunits C and H. The proton translocation complex V0 consists of the proton transport subunit a, a ring of proteolipid subunits c9c'', rotary subunit d, subunits e and f, and the accessory subunits ATP6AP1/Ac45 and ATP6AP2/PRR.

Subunit of the V1 complex of vacuolar(H+)-ATPase (V-ATPase), a multisubunit enzyme composed of a peripheral complex (V1) that hydrolyzes ATP and a membrane integral complex (V0) that translocates protons. V-ATPase is responsible for acidifying and maintaining the pH of intracellular compartments and in some cell types, is targeted to the plasma membrane, where it is responsible for acidifying the extracellular environment. The protein is V-type proton ATPase subunit E 2 (ATP6V1E2) of Bos taurus (Bovine).